An 838-amino-acid chain; its full sequence is Probable bifunctional folylpolyglutamate synthase/dihydropteroate synthase (838 aa).

A folylpolyglutamate synthase region spans residues Met-1 to Ala-418. Gly-46–Ser-52 contacts ATP. The disordered stretch occupies residues Ala-541–Asp-561. Positions Thr-569–Asn-819 constitute a Pterin-binding domain. A DHPS region spans residues Val-571–Asp-838. Asn-576 contributes to the Mg(2+) binding site. Residues Thr-616, Asp-649, Asn-668, Asp-738, Lys-774, and Arg-807–His-809 each bind (7,8-dihydropterin-6-yl)methyl diphosphate.

It in the N-terminal section; belongs to the folylpolyglutamate synthase family. The protein in the C-terminal section; belongs to the DHPS family. The cofactor is Mg(2+).

The catalysed reaction is (6S)-5,6,7,8-tetrahydrofolyl-(gamma-L-Glu)(n) + L-glutamate + ATP = (6S)-5,6,7,8-tetrahydrofolyl-(gamma-L-Glu)(n+1) + ADP + phosphate + H(+). It catalyses the reaction (7,8-dihydropterin-6-yl)methyl diphosphate + 4-aminobenzoate = 7,8-dihydropteroate + diphosphate. It participates in cofactor biosynthesis; tetrahydrofolylpolyglutamate biosynthesis. Its pathway is cofactor biosynthesis; tetrahydrofolate biosynthesis; 7,8-dihydrofolate from 2-amino-4-hydroxy-6-hydroxymethyl-7,8-dihydropteridine diphosphate and 4-aminobenzoate: step 1/2. In terms of biological role, can complement an H.volcanii mutant strain that is thymidine auxotroph because it lacks the two dihydrofolate reductase genes encoded by hdrA and hdrB. This is Probable bifunctional folylpolyglutamate synthase/dihydropteroate synthase (folCP) from Haloferax volcanii (strain ATCC 29605 / DSM 3757 / JCM 8879 / NBRC 14742 / NCIMB 2012 / VKM B-1768 / DS2) (Halobacterium volcanii).